Here is a 289-residue protein sequence, read N- to C-terminus: HTH-type transcriptional activator AmpR (289 aa).

In terms of domain architecture, HTH lysR-type spans 6–63; sequence LPLNALRVFEVAMRQGSFTKAAIELRVTQAAVSHQVARLEDLLGTALFLRTSQGLIPT. The segment at residues 23–42 is a DNA-binding region (H-T-H motif); it reads FTKAAIELRVTQAAVSHQVA.

Belongs to the LysR transcriptional regulatory family.

It localises to the cytoplasm. In terms of biological role, this protein is a positive regulator of gene expression of cephalosporinase (AmpC). The polypeptide is HTH-type transcriptional activator AmpR (ampR) (Rhodobacter capsulatus (Rhodopseudomonas capsulata)).